Reading from the N-terminus, the 94-residue chain is Small ribosomal subunit protein uS17 (94 aa).

This sequence belongs to the universal ribosomal protein uS17 family. As to quaternary structure, part of the 30S ribosomal subunit.

Its function is as follows. One of the primary rRNA binding proteins, it binds specifically to the 5'-end of 16S ribosomal RNA. This is Small ribosomal subunit protein uS17 from Symbiobacterium thermophilum (strain DSM 24528 / JCM 14929 / IAM 14863 / T).